An 85-amino-acid chain; its full sequence is HPr-like protein Crh (85 aa).

The region spanning 1–85 (MVQQKVEVRL…KLAAYVQEEV (85 aa)) is the HPr domain. S46 carries the phosphoserine; by HPrK/P modification.

Belongs to the HPr family. In terms of assembly, mixture of monomers and homodimers. Interacts with CcpA as a monomer.

Its function is as follows. Along with seryl-phosphorylated HPr, phosphorylated Crh is implicated in carbon catabolite repression (CCR) of levanase, inositol dehydrogenase, and beta-xylosidase. Exerts its effect on CCR by interacting with CcpA. The chain is HPr-like protein Crh (crh) from Bacillus subtilis (strain 168).